Here is a 295-residue protein sequence, read N- to C-terminus: Acetyl-coenzyme A carboxylase carboxyl transferase subunit beta (295 aa).

Residues 1-20 form a disordered region; it reads MSWLSKLMPSGIRTENTPAK. Residues 28-295 form the CoA carboxyltransferase N-terminal domain; sequence LWEKCSNCGS…QPHPQDADAA (268 aa). Residues C32, C35, C51, and C54 each contribute to the Zn(2+) site. The C4-type zinc finger occupies 32–54; the sequence is CSNCGSALYGPELEENLEVCPKC.

The protein belongs to the AccD/PCCB family. As to quaternary structure, acetyl-CoA carboxylase is a heterohexamer composed of biotin carboxyl carrier protein (AccB), biotin carboxylase (AccC) and two subunits each of ACCase subunit alpha (AccA) and ACCase subunit beta (AccD). It depends on Zn(2+) as a cofactor.

The protein resides in the cytoplasm. It carries out the reaction N(6)-carboxybiotinyl-L-lysyl-[protein] + acetyl-CoA = N(6)-biotinyl-L-lysyl-[protein] + malonyl-CoA. It participates in lipid metabolism; malonyl-CoA biosynthesis; malonyl-CoA from acetyl-CoA: step 1/1. Functionally, component of the acetyl coenzyme A carboxylase (ACC) complex. Biotin carboxylase (BC) catalyzes the carboxylation of biotin on its carrier protein (BCCP) and then the CO(2) group is transferred by the transcarboxylase to acetyl-CoA to form malonyl-CoA. The polypeptide is Acetyl-coenzyme A carboxylase carboxyl transferase subunit beta (Xanthomonas axonopodis pv. citri (strain 306)).